The sequence spans 844 residues: DNA mismatch repair protein MutS (844 aa).

610-617 (GPNMGGKS) is an ATP binding site.

The protein belongs to the DNA mismatch repair MutS family.

Functionally, this protein is involved in the repair of mismatches in DNA. It is possible that it carries out the mismatch recognition step. This protein has a weak ATPase activity. The chain is DNA mismatch repair protein MutS from Francisella tularensis subsp. mediasiatica (strain FSC147).